A 380-amino-acid chain; its full sequence is Succinyl-diaminopimelate desuccinylase (380 aa).

H71 serves as a coordination point for Zn(2+). D73 is an active-site residue. D104 lines the Zn(2+) pocket. Residue E138 is the Proton acceptor of the active site. Zn(2+) contacts are provided by E139, E167, and H353.

It belongs to the peptidase M20A family. DapE subfamily. In terms of assembly, homodimer. Zn(2+) serves as cofactor. It depends on Co(2+) as a cofactor.

The catalysed reaction is N-succinyl-(2S,6S)-2,6-diaminopimelate + H2O = (2S,6S)-2,6-diaminopimelate + succinate. The protein operates within amino-acid biosynthesis; L-lysine biosynthesis via DAP pathway; LL-2,6-diaminopimelate from (S)-tetrahydrodipicolinate (succinylase route): step 3/3. In terms of biological role, catalyzes the hydrolysis of N-succinyl-L,L-diaminopimelic acid (SDAP), forming succinate and LL-2,6-diaminopimelate (DAP), an intermediate involved in the bacterial biosynthesis of lysine and meso-diaminopimelic acid, an essential component of bacterial cell walls. In Shewanella baltica (strain OS185), this protein is Succinyl-diaminopimelate desuccinylase.